The following is a 257-amino-acid chain: Imidazole glycerol phosphate synthase subunit HisF (257 aa).

Residues Asp-11 and Asp-130 contribute to the active site.

It belongs to the HisA/HisF family. Heterodimer of HisH and HisF.

The protein resides in the cytoplasm. The catalysed reaction is 5-[(5-phospho-1-deoxy-D-ribulos-1-ylimino)methylamino]-1-(5-phospho-beta-D-ribosyl)imidazole-4-carboxamide + L-glutamine = D-erythro-1-(imidazol-4-yl)glycerol 3-phosphate + 5-amino-1-(5-phospho-beta-D-ribosyl)imidazole-4-carboxamide + L-glutamate + H(+). It participates in amino-acid biosynthesis; L-histidine biosynthesis; L-histidine from 5-phospho-alpha-D-ribose 1-diphosphate: step 5/9. Its function is as follows. IGPS catalyzes the conversion of PRFAR and glutamine to IGP, AICAR and glutamate. The HisF subunit catalyzes the cyclization activity that produces IGP and AICAR from PRFAR using the ammonia provided by the HisH subunit. This Shewanella loihica (strain ATCC BAA-1088 / PV-4) protein is Imidazole glycerol phosphate synthase subunit HisF.